A 192-amino-acid polypeptide reads, in one-letter code: Inner membrane protein YohD (192 aa).

Over 1–40 (MDLNTLISQYGYAALVIGSLAEGETVTLLGGVAAHQGLLK) the chain is Periplasmic. The helical transmembrane segment at 41-61 (FPLVVLSVALGGMIGDQVLYL) threads the bilayer. Over 62–121 (CGRRFGGKLLRRFSKHQDKIERAQKLIQRHPYLFVIGTRFMYGFRVIGPTLIGASQLPPK) the chain is Cytoplasmic. Residues 122-142 (IFLPLNILGAFAWALIFTTIG) form a helical membrane-spanning segment. Topologically, residues 143 to 159 (YAGGQVIAPWLHNLDQH) are periplasmic. The helical transmembrane segment at 160 to 180 (LKHWVWLILVVVLVVGVRWWL) threads the bilayer. Residues 181-192 (KRRGKKKPDHQA) are Cytoplasmic-facing.

The protein belongs to the DedA family.

It is found in the cell inner membrane. In Escherichia coli (strain K12), this protein is Inner membrane protein YohD (yohD).